Consider the following 247-residue polypeptide: Adenosylcobinamide-GDP ribazoletransferase (247 aa).

A run of 5 helical transmembrane segments spans residues 34–54 (IVMF…IFIL), 59–79 (CGIP…TGGF), 113–133 (GGLA…ELAL), 138–158 (VLAA…LLMY), and 194–214 (VLLP…AIFI).

This sequence belongs to the CobS family. Requires Mg(2+) as cofactor.

It is found in the cell inner membrane. The catalysed reaction is alpha-ribazole + adenosylcob(III)inamide-GDP = adenosylcob(III)alamin + GMP + H(+). It carries out the reaction alpha-ribazole 5'-phosphate + adenosylcob(III)inamide-GDP = adenosylcob(III)alamin 5'-phosphate + GMP + H(+). The protein operates within cofactor biosynthesis; adenosylcobalamin biosynthesis; adenosylcobalamin from cob(II)yrinate a,c-diamide: step 7/7. Joins adenosylcobinamide-GDP and alpha-ribazole to generate adenosylcobalamin (Ado-cobalamin). Also synthesizes adenosylcobalamin 5'-phosphate from adenosylcobinamide-GDP and alpha-ribazole 5'-phosphate. The chain is Adenosylcobinamide-GDP ribazoletransferase from Salmonella arizonae (strain ATCC BAA-731 / CDC346-86 / RSK2980).